Consider the following 443-residue polypeptide: Serine/threonine-protein kinase ISR1 (443 aa).

The region spanning 135–415 (LPSNKLVGQG…LRNDLFQDWK (281 aa)) is the Protein kinase domain. Residues 141 to 149 (VGQGSYSYV) and Lys-169 each bind ATP. The Proton acceptor role is filled by Asp-280.

Belongs to the protein kinase superfamily. Ser/Thr protein kinase family.

The catalysed reaction is L-seryl-[protein] + ATP = O-phospho-L-seryl-[protein] + ADP + H(+). It carries out the reaction L-threonyl-[protein] + ATP = O-phospho-L-threonyl-[protein] + ADP + H(+). Functionally, probable serine/threonine protein kinase which may function redundantly with MPK1-independent branch of the PCK1 pathway that is presumed to be required for the tolerance to high temperatures and staurosporine. This chain is Serine/threonine-protein kinase ISR1 (ISR1), found in Saccharomyces cerevisiae (strain ATCC 204508 / S288c) (Baker's yeast).